A 322-amino-acid chain; its full sequence is Ribonuclease Z (322 aa).

His60, His62, Asp64, His65, His140, Asp210, and His270 together coordinate Zn(2+). Asp64 acts as the Proton acceptor in catalysis.

This sequence belongs to the RNase Z family. Homodimer. Requires Zn(2+) as cofactor.

The catalysed reaction is Endonucleolytic cleavage of RNA, removing extra 3' nucleotides from tRNA precursor, generating 3' termini of tRNAs. A 3'-hydroxy group is left at the tRNA terminus and a 5'-phosphoryl group is left at the trailer molecule.. In terms of biological role, zinc phosphodiesterase, which displays some tRNA 3'-processing endonuclease activity. Probably involved in tRNA maturation, by removing a 3'-trailer from precursor tRNA. The sequence is that of Ribonuclease Z from Methanococcus aeolicus (strain ATCC BAA-1280 / DSM 17508 / OCM 812 / Nankai-3).